We begin with the raw amino-acid sequence, 490 residues long: Bifunctional protein GlmU (490 aa).

The interval 1–241 (MSSPGDTAVL…SALVAGVNNR (241 aa)) is pyrophosphorylase. Residues 12-15 (LAAG), Lys-26, Gln-83, 88-89 (GT), 112-114 (SGD), Gly-151, Glu-166, Asn-181, and Asn-239 each bind UDP-N-acetyl-alpha-D-glucosamine. Mg(2+) is bound at residue Asp-114. Asn-239 serves as a coordination point for Mg(2+). The linker stretch occupies residues 242-262 (VQLAQLGAELNRRIVAAHQLA). Residues 263-490 (GVTVVDPATT…AGGRPAGEAE (228 aa)) form an N-acetyltransferase region. 2 residues coordinate UDP-N-acetyl-alpha-D-glucosamine: Arg-344 and Lys-362. His-374 (proton acceptor) is an active-site residue. The UDP-N-acetyl-alpha-D-glucosamine site is built by Tyr-377 and Asn-388. Residues Ala-391, 397 to 398 (NY), Ser-416, and Ala-434 contribute to the acetyl-CoA site. Residues 462–490 (RRKRPGSAAARAAEAAEKAAGGRPAGEAE) form a disordered region. A compositionally biased stretch (low complexity) spans 467 to 490 (GSAAARAAEAAEKAAGGRPAGEAE).

It in the N-terminal section; belongs to the N-acetylglucosamine-1-phosphate uridyltransferase family. In the C-terminal section; belongs to the transferase hexapeptide repeat family. Homotrimer. Mg(2+) serves as cofactor.

It localises to the cytoplasm. It catalyses the reaction alpha-D-glucosamine 1-phosphate + acetyl-CoA = N-acetyl-alpha-D-glucosamine 1-phosphate + CoA + H(+). The catalysed reaction is N-acetyl-alpha-D-glucosamine 1-phosphate + UTP + H(+) = UDP-N-acetyl-alpha-D-glucosamine + diphosphate. It functions in the pathway nucleotide-sugar biosynthesis; UDP-N-acetyl-alpha-D-glucosamine biosynthesis; N-acetyl-alpha-D-glucosamine 1-phosphate from alpha-D-glucosamine 6-phosphate (route II): step 2/2. It participates in nucleotide-sugar biosynthesis; UDP-N-acetyl-alpha-D-glucosamine biosynthesis; UDP-N-acetyl-alpha-D-glucosamine from N-acetyl-alpha-D-glucosamine 1-phosphate: step 1/1. The protein operates within bacterial outer membrane biogenesis; LPS lipid A biosynthesis. In terms of biological role, catalyzes the last two sequential reactions in the de novo biosynthetic pathway for UDP-N-acetylglucosamine (UDP-GlcNAc). The C-terminal domain catalyzes the transfer of acetyl group from acetyl coenzyme A to glucosamine-1-phosphate (GlcN-1-P) to produce N-acetylglucosamine-1-phosphate (GlcNAc-1-P), which is converted into UDP-GlcNAc by the transfer of uridine 5-monophosphate (from uridine 5-triphosphate), a reaction catalyzed by the N-terminal domain. In Mycolicibacterium paratuberculosis (strain ATCC BAA-968 / K-10) (Mycobacterium paratuberculosis), this protein is Bifunctional protein GlmU.